A 273-amino-acid polypeptide reads, in one-letter code: Dermonecrotic toxin LspiSicTox-betaIE1i (273 aa).

Positions 25 and 27 each coordinate Mg(2+). H41 serves as the catalytic Nucleophile. C45 and C51 form a disulfide bridge. D85 is a Mg(2+) binding site.

This sequence belongs to the arthropod phospholipase D family. Class I subfamily. It depends on Mg(2+) as a cofactor. Expressed by the venom gland.

It is found in the secreted. It carries out the reaction an N-(acyl)-sphingosylphosphocholine = an N-(acyl)-sphingosyl-1,3-cyclic phosphate + choline. The catalysed reaction is an N-(acyl)-sphingosylphosphoethanolamine = an N-(acyl)-sphingosyl-1,3-cyclic phosphate + ethanolamine. The enzyme catalyses a 1-acyl-sn-glycero-3-phosphocholine = a 1-acyl-sn-glycero-2,3-cyclic phosphate + choline. It catalyses the reaction a 1-acyl-sn-glycero-3-phosphoethanolamine = a 1-acyl-sn-glycero-2,3-cyclic phosphate + ethanolamine. Functionally, dermonecrotic toxins cleave the phosphodiester linkage between the phosphate and headgroup of certain phospholipids (sphingolipid and lysolipid substrates), forming an alcohol (often choline) and a cyclic phosphate. This toxin acts on sphingomyelin (SM). It may also act on ceramide phosphoethanolamine (CPE), lysophosphatidylcholine (LPC) and lysophosphatidylethanolamine (LPE), but not on lysophosphatidylserine (LPS), and lysophosphatidylglycerol (LPG). It acts by transphosphatidylation, releasing exclusively cyclic phosphate products as second products. Induces dermonecrosis, hemolysis, increased vascular permeability, edema, inflammatory response, and platelet aggregation. This Loxosceles spinulosa (Recluse spider) protein is Dermonecrotic toxin LspiSicTox-betaIE1i.